A 586-amino-acid chain; its full sequence is Tetratricopeptide repeat protein 39B (586 aa).

TPR repeat units follow at residues 292-325, 483-516, and 524-557; these read SIIL…QQEW, CLVQ…EKRV, and PFTF…YKDY.

Belongs to the TTC39 family.

Its function is as follows. May be involved in lipid metabolism. The chain is Tetratricopeptide repeat protein 39B (ttc39b) from Xenopus laevis (African clawed frog).